Consider the following 548-residue polypeptide: Elongator complex protein 3 (548 aa).

The Radical SAM core domain occupies 83–373 (RTASGIAVVA…YRVQRDIPMP (291 aa)). The [4Fe-4S] cluster site is built by Cys100, Cys110, and Cys113. Acetyl-CoA contacts are provided by residues Lys165, 475 to 478 (ELHV), 498 to 500 (FGM), and Tyr531. The 152-residue stretch at 397–548 (TECRDVRTRE…EGPYMVKNLY (152 aa)) folds into the N-acetyltransferase domain.

The protein belongs to the ELP3 family. In terms of assembly, component of the elongator complex. [4Fe-4S] cluster serves as cofactor.

The protein resides in the cytoplasm. The protein localises to the nucleus. It catalyses the reaction uridine(34) in tRNA + acetyl-CoA + S-adenosyl-L-methionine + H2O = 5-(carboxymethyl)uridine(34) in tRNA + 5'-deoxyadenosine + L-methionine + CoA + 2 H(+). It functions in the pathway tRNA modification; 5-methoxycarbonylmethyl-2-thiouridine-tRNA biosynthesis. In terms of biological role, catalytic tRNA acetyltransferase subunit of the elongator complex which is required for multiple tRNA modifications, including mcm5U (5-methoxycarbonylmethyl uridine), mcm5s2U (5-methoxycarbonylmethyl-2-thiouridine), and ncm5U (5-carbamoylmethyl uridine). In the elongator complex, acts as a tRNA uridine(34) acetyltransferase by mediating formation of carboxymethyluridine in the wobble base at position 34 in tRNAs. Involved in neurogenesis. Involved in somite development. The protein is Elongator complex protein 3 of Danio rerio (Zebrafish).